A 192-amino-acid polypeptide reads, in one-letter code: ATP synthase subunit b 2 (192 aa).

The chain crosses the membrane as a helical span at residues 39–59; that stretch reads SGFLAQLIWLALAFGLLYYLM.

The protein belongs to the ATPase B chain family. F-type ATPases have 2 components, F(1) - the catalytic core - and F(0) - the membrane proton channel. F(1) has five subunits: alpha(3), beta(3), gamma(1), delta(1), epsilon(1). F(0) has three main subunits: a(1), b(2) and c(10-14). The alpha and beta chains form an alternating ring which encloses part of the gamma chain. F(1) is attached to F(0) by a central stalk formed by the gamma and epsilon chains, while a peripheral stalk is formed by the delta and b chains.

It localises to the cell inner membrane. In terms of biological role, f(1)F(0) ATP synthase produces ATP from ADP in the presence of a proton or sodium gradient. F-type ATPases consist of two structural domains, F(1) containing the extramembraneous catalytic core and F(0) containing the membrane proton channel, linked together by a central stalk and a peripheral stalk. During catalysis, ATP synthesis in the catalytic domain of F(1) is coupled via a rotary mechanism of the central stalk subunits to proton translocation. Component of the F(0) channel, it forms part of the peripheral stalk, linking F(1) to F(0). The b'-subunit is a diverged and duplicated form of b found in plants and photosynthetic bacteria. In Methylobacterium radiotolerans (strain ATCC 27329 / DSM 1819 / JCM 2831 / NBRC 15690 / NCIMB 10815 / 0-1), this protein is ATP synthase subunit b 2 (atpF2).